The following is a 256-amino-acid chain: Adenosylcobinamide-GDP ribazoletransferase (256 aa).

A run of 6 helical transmembrane segments spans residues 40 to 60 (YFPLIGWLVGAVAAAVYWLVL), 64 to 84 (PAQGVAVAVSMGATLLLTGAF), 114 to 134 (IGAFGAIAVCMALLLKWQLLS), 143 to 163 (ILVAMVAAHAASRAAAVSHLL), 194 to 214 (VVPLLWFGPMCAALIVVGLIL), and 234 to 254 (CLGMAQQIFELLILWGLLAWM).

The protein belongs to the CobS family. It depends on Mg(2+) as a cofactor.

It localises to the cell inner membrane. The catalysed reaction is alpha-ribazole + adenosylcob(III)inamide-GDP = adenosylcob(III)alamin + GMP + H(+). The enzyme catalyses alpha-ribazole 5'-phosphate + adenosylcob(III)inamide-GDP = adenosylcob(III)alamin 5'-phosphate + GMP + H(+). It functions in the pathway cofactor biosynthesis; adenosylcobalamin biosynthesis; adenosylcobalamin from cob(II)yrinate a,c-diamide: step 7/7. Its function is as follows. Joins adenosylcobinamide-GDP and alpha-ribazole to generate adenosylcobalamin (Ado-cobalamin). Also synthesizes adenosylcobalamin 5'-phosphate from adenosylcobinamide-GDP and alpha-ribazole 5'-phosphate. The sequence is that of Adenosylcobinamide-GDP ribazoletransferase from Ralstonia pickettii (strain 12J).